The following is a 232-amino-acid chain: tRNA (guanine-N(1)-)-methyltransferase (232 aa).

S-adenosyl-L-methionine-binding positions include G108 and 128–133 (IGDFIM).

The protein belongs to the RNA methyltransferase TrmD family. In terms of assembly, homodimer.

The protein resides in the cytoplasm. The enzyme catalyses guanosine(37) in tRNA + S-adenosyl-L-methionine = N(1)-methylguanosine(37) in tRNA + S-adenosyl-L-homocysteine + H(+). Its function is as follows. Specifically methylates guanosine-37 in various tRNAs. In Campylobacter fetus subsp. fetus (strain 82-40), this protein is tRNA (guanine-N(1)-)-methyltransferase.